The sequence spans 210 residues: Small ribosomal subunit protein uS3 (210 aa).

One can recognise a KH type-2 domain in the interval 17–86 (IDEFLEKELR…NPQIDVQEIK (70 aa)).

The protein belongs to the universal ribosomal protein uS3 family. In terms of assembly, part of the 30S ribosomal subunit.

Functionally, binds the lower part of the 30S subunit head. This is Small ribosomal subunit protein uS3 from Pyrococcus horikoshii (strain ATCC 700860 / DSM 12428 / JCM 9974 / NBRC 100139 / OT-3).